We begin with the raw amino-acid sequence, 255 residues long: Aliphatic sulfonates import ATP-binding protein SsuB (255 aa).

Residues 12–233 enclose the ABC transporter domain; that stretch reads LLLNAVSKHY…RLGSVRLAEL (222 aa). An ATP-binding site is contributed by 44–51; it reads GRSGGGKS.

Belongs to the ABC transporter superfamily. Aliphatic sulfonates importer (TC 3.A.1.17.2) family. As to quaternary structure, the complex is composed of two ATP-binding proteins (SsuB), two transmembrane proteins (SsuC) and a solute-binding protein (SsuA).

It is found in the cell inner membrane. It carries out the reaction ATP + H2O + aliphatic sulfonate-[sulfonate-binding protein]Side 1 = ADP + phosphate + aliphatic sulfonateSide 2 + [sulfonate-binding protein]Side 1.. Its function is as follows. Part of the ABC transporter complex SsuABC involved in aliphatic sulfonates import. Responsible for energy coupling to the transport system. This chain is Aliphatic sulfonates import ATP-binding protein SsuB, found in Escherichia coli O6:K15:H31 (strain 536 / UPEC).